The chain runs to 256 residues: DNA repair protein RecO (256 aa).

It belongs to the RecO family.

Functionally, involved in DNA repair and RecF pathway recombination. The chain is DNA repair protein RecO from Pelotomaculum thermopropionicum (strain DSM 13744 / JCM 10971 / SI).